Here is a 684-residue protein sequence, read N- to C-terminus: DNA ligase (684 aa).

Residues 34-38 (DYDFD), 83-84 (SL), and Glu117 contribute to the NAD(+) site. Lys119 (N6-AMP-lysine intermediate) is an active-site residue. The NAD(+) site is built by Arg140, Glu188, Lys301, and Lys325. Zn(2+) contacts are provided by Cys419, Cys422, Cys437, and Cys443. The region spanning 602–684 (DAPQTFAGMT…QTMLAAESGD (83 aa)) is the BRCT domain.

It belongs to the NAD-dependent DNA ligase family. LigA subfamily. Requires Mg(2+) as cofactor. Mn(2+) is required as a cofactor.

The catalysed reaction is NAD(+) + (deoxyribonucleotide)n-3'-hydroxyl + 5'-phospho-(deoxyribonucleotide)m = (deoxyribonucleotide)n+m + AMP + beta-nicotinamide D-nucleotide.. In terms of biological role, DNA ligase that catalyzes the formation of phosphodiester linkages between 5'-phosphoryl and 3'-hydroxyl groups in double-stranded DNA using NAD as a coenzyme and as the energy source for the reaction. It is essential for DNA replication and repair of damaged DNA. This chain is DNA ligase, found in Chloroherpeton thalassium (strain ATCC 35110 / GB-78).